The sequence spans 206 residues: 2,3-bisphosphoglycerate-dependent phosphoglycerate mutase (206 aa).

Substrate-binding positions include 9-16 (RHGQSEWN), 22-23 (TG), R61, 88-91 (ERDY), K99, 115-116 (RR), and 159-160 (GN). The active-site Tele-phosphohistidine intermediate is the H10. Residue E88 is the Proton donor/acceptor of the active site.

Belongs to the phosphoglycerate mutase family. BPG-dependent PGAM subfamily. As to quaternary structure, homodimer.

The catalysed reaction is (2R)-2-phosphoglycerate = (2R)-3-phosphoglycerate. It participates in carbohydrate degradation; glycolysis; pyruvate from D-glyceraldehyde 3-phosphate: step 3/5. In terms of biological role, catalyzes the interconversion of 2-phosphoglycerate and 3-phosphoglycerate. This chain is 2,3-bisphosphoglycerate-dependent phosphoglycerate mutase, found in Chelativorans sp. (strain BNC1).